A 334-amino-acid chain; its full sequence is MDGVIVYCLNALVKHGEEINHIKNDFMIKPCCERVCEKVKNVHIDGQSKNNTVIADLPYLDNAVLDVCKSVYKKNVSRISRFANLIKIDDDDKTPTGVYNYFKPKDAISVIISIGKDKDVCELLIASDKACACIELNSYKVAILPMNVSFFTKGNASLIILLFDFSINAAPLLRSVTDNNVVISRHKRLHGEIPSSNWFKFYISIKSNYCSILYMVVDGSVMYAIADNKTHTIISKNILDNTTINDECRCCYFEPQIKILDRDEMLNGSSCDMNRHCIMMNLPDIGEFGSSILGKYEPDMIKIALSVAGNLIRNQDYIPGRRGYSYYVYGIASR.

It belongs to the orthopoxvirus OPG181 family.

This is Protein OPG181 (OPG181) from Homo sapiens (Human).